The following is a 163-amino-acid chain: Acetolactate synthase isozyme 3 small subunit (163 aa).

One can recognise an ACT domain in the interval 4–78 (ILSVLLENES…DVLRVSELGQ (75 aa)).

It belongs to the acetolactate synthase small subunit family. In terms of assembly, dimer of large and small chains.

It catalyses the reaction 2 pyruvate + H(+) = (2S)-2-acetolactate + CO2. It functions in the pathway amino-acid biosynthesis; L-isoleucine biosynthesis; L-isoleucine from 2-oxobutanoate: step 1/4. The protein operates within amino-acid biosynthesis; L-valine biosynthesis; L-valine from pyruvate: step 1/4. Sensitive to valine inhibition. The polypeptide is Acetolactate synthase isozyme 3 small subunit (ilvH) (Escherichia coli (strain K12)).